Here is a 272-residue protein sequence, read N- to C-terminus: Shikimate dehydrogenase (NADP(+)) (272 aa).

Shikimate is bound by residues 14–16 (SKS) and threonine 61. Catalysis depends on lysine 65, which acts as the Proton acceptor. Glutamate 77 lines the NADP(+) pocket. Positions 86 and 102 each coordinate shikimate. Residues 126–130 (GAGGA), 149–154 (NRTVSR), and methionine 213 each bind NADP(+). Tyrosine 215 is a shikimate binding site. Glycine 237 is a binding site for NADP(+).

This sequence belongs to the shikimate dehydrogenase family. As to quaternary structure, homodimer.

It catalyses the reaction shikimate + NADP(+) = 3-dehydroshikimate + NADPH + H(+). It functions in the pathway metabolic intermediate biosynthesis; chorismate biosynthesis; chorismate from D-erythrose 4-phosphate and phosphoenolpyruvate: step 4/7. In terms of biological role, involved in the biosynthesis of the chorismate, which leads to the biosynthesis of aromatic amino acids. Catalyzes the reversible NADPH linked reduction of 3-dehydroshikimate (DHSA) to yield shikimate (SA). The chain is Shikimate dehydrogenase (NADP(+)) from Escherichia coli O139:H28 (strain E24377A / ETEC).